Consider the following 39-residue polypeptide: Gas vesicle protein C (39 aa).

It belongs to the gas vesicle GvpC family.

The protein resides in the gas vesicle. Functionally, confers stability, involved in shaping gas vesicles, hollow, gas filled proteinaceous nanostructures. During planktonic growth they allow positioning of the organism at a favorable depth for light or nutrient acquisition. This Spirulina sp. (strain CCAP 1475/10) protein is Gas vesicle protein C.